Consider the following 163-residue polypeptide: uncharacterized protein (163 aa).

Residues 142 to 163 (PQIVISEHNNTKETSPSRQFEH) form a disordered region. The segment covering 153–163 (KETSPSRQFEH) has biased composition (polar residues).

It belongs to the RCAN family.

Inhibits calcineurin-dependent transcriptional responses by binding to the catalytic domain of calcineurin. This is an uncharacterized protein from Schizosaccharomyces pombe (strain 972 / ATCC 24843) (Fission yeast).